The chain runs to 452 residues: Pup--protein ligase (452 aa).

Glu9 contributes to the Mg(2+) binding site. Arg53 is a binding site for ATP. Tyr55 is a binding site for Mg(2+). Residue Asp57 is the Proton acceptor of the active site. Residue Glu63 participates in Mg(2+) binding. 2 residues coordinate ATP: Thr66 and Trp419.

It belongs to the Pup ligase/Pup deamidase family. Pup-conjugating enzyme subfamily.

The catalysed reaction is ATP + [prokaryotic ubiquitin-like protein]-L-glutamate + [protein]-L-lysine = ADP + phosphate + N(6)-([prokaryotic ubiquitin-like protein]-gamma-L-glutamyl)-[protein]-L-lysine.. It functions in the pathway protein degradation; proteasomal Pup-dependent pathway. It participates in protein modification; protein pupylation. Its function is as follows. Catalyzes the covalent attachment of the prokaryotic ubiquitin-like protein modifier Pup to the proteasomal substrate proteins, thereby targeting them for proteasomal degradation. This tagging system is termed pupylation. The ligation reaction involves the side-chain carboxylate of the C-terminal glutamate of Pup and the side-chain amino group of a substrate lysine. The chain is Pup--protein ligase from Nakamurella multipartita (strain ATCC 700099 / DSM 44233 / CIP 104796 / JCM 9543 / NBRC 105858 / Y-104) (Microsphaera multipartita).